The primary structure comprises 470 residues: MENLQVKALPKEFLLGTATAAYQVEGATRVDGKGINMWDVYLQENSPFLPDPASDFYYRYEEDIALAAEHGLQALRLSISWVRIFPDIDGDANVLAVHYYHRVFQSCLKHNVIPFVSLHHFDSPQKMLETGDWLNRENIDRFIRYARFCFQEFTEVKHWFTINELMSLAAGQYIGGQFPPNHHFQLSEAIQANHNMLLAHALAVLEFHQLGIEGKVGCIHALKPGYPIDGQKENILAAKRYDVYNNKFLLDGTFLGYYSEDTLFHLNQILEANNSSFIIEDGDLEIMKRAAPLNTMFVMNYYRSEFIREYKGENRQEFNSTGIKGQSSFKLNALGEFVKKPGIPTTDWDWNIYPQGLFDMLLRIKEEYPQHPVIYLTENGTALKEVKPEGENDIIDDSKRIRYIEQHLHKVLEARDRGVNIQGYFIWSLQDQFSWANGYNKRYGLFFVDYETQKRYIKKSALWVKGLKRN.

Residues glutamine 23, histidine 120, asparagine 163, glutamate 164, and asparagine 300 each coordinate D-galactose 6-phosphate. Catalysis depends on glutamate 164, which acts as the Proton donor. Glutamate 378 acts as the Nucleophile in catalysis. 4 residues coordinate D-galactose 6-phosphate: serine 434, tryptophan 435, lysine 441, and tyrosine 443.

Belongs to the glycosyl hydrolase 1 family.

The catalysed reaction is a 6-phospho-beta-D-galactoside + H2O = D-galactose 6-phosphate + an alcohol. The protein operates within carbohydrate metabolism; lactose degradation; D-galactose 6-phosphate and beta-D-glucose from lactose 6-phosphate: step 1/1. This chain is 6-phospho-beta-galactosidase 1, found in Streptococcus pneumoniae (strain ATCC BAA-255 / R6).